Consider the following 347-residue polypeptide: Protein RecA (347 aa).

64–71 (GPESSGKT) lines the ATP pocket. Residues 328-347 (DKVDEDKTEEEASQESLDLK) are disordered.

The protein belongs to the RecA family.

Its subcellular location is the cytoplasm. Can catalyze the hydrolysis of ATP in the presence of single-stranded DNA, the ATP-dependent uptake of single-stranded DNA by duplex DNA, and the ATP-dependent hybridization of homologous single-stranded DNAs. It interacts with LexA causing its activation and leading to its autocatalytic cleavage. The polypeptide is Protein RecA (Oceanobacillus iheyensis (strain DSM 14371 / CIP 107618 / JCM 11309 / KCTC 3954 / HTE831)).